We begin with the raw amino-acid sequence, 57 residues long: uncharacterized protein (57 aa).

A helical membrane pass occupies residues 34–54; it reads AALLDAAALVVIPGLLTVAAV.

It is found in the membrane. This is an uncharacterized protein from Dictyostelium discoideum (Social amoeba).